Reading from the N-terminus, the 385-residue chain is ATP phosphoribosyltransferase regulatory subunit (385 aa).

Belongs to the class-II aminoacyl-tRNA synthetase family. HisZ subfamily. As to quaternary structure, heteromultimer composed of HisG and HisZ subunits.

It localises to the cytoplasm. Its pathway is amino-acid biosynthesis; L-histidine biosynthesis; L-histidine from 5-phospho-alpha-D-ribose 1-diphosphate: step 1/9. Required for the first step of histidine biosynthesis. May allow the feedback regulation of ATP phosphoribosyltransferase activity by histidine. The sequence is that of ATP phosphoribosyltransferase regulatory subunit from Bordetella avium (strain 197N).